The sequence spans 342 residues: MNKDLLLSSYDYTLANELIANYPANPKEDARLLVFDRKNKEIFHTTFKNLKDFLPDCAIFFNDTKVIKARIYGNKASGGKIELFLHQPFLNSHNPLFLAQIKGRVKKDEILYFKEDLKARVVELLDDGLRKVQFFQNDKTLDTSNLYNLLDKIGHIPLPPYIKREDEKSDLKDYQSIFAKNLGAVAAPTASLHFSETMFENLRKKHKIYHLTLHVGAGTFKGVECENIQEHKMHSEFFNIPQQACEIIDSKQAILGVGTTVTRTIEYYARTKTKSGFCDLFLHPQNPPIRQNHLLTNFHLPKSTLIMLVSAFIGREQCLKLYKLAIKEKYRFYSYGDAMLIL.

It belongs to the QueA family. As to quaternary structure, monomer.

The protein localises to the cytoplasm. The catalysed reaction is 7-aminomethyl-7-carbaguanosine(34) in tRNA + S-adenosyl-L-methionine = epoxyqueuosine(34) in tRNA + adenine + L-methionine + 2 H(+). It participates in tRNA modification; tRNA-queuosine biosynthesis. Functionally, transfers and isomerizes the ribose moiety from AdoMet to the 7-aminomethyl group of 7-deazaguanine (preQ1-tRNA) to give epoxyqueuosine (oQ-tRNA). This Campylobacter jejuni subsp. jejuni serotype O:23/36 (strain 81-176) protein is S-adenosylmethionine:tRNA ribosyltransferase-isomerase.